The chain runs to 431 residues: MKIIDWNQLDTAAQAQTLTRPAQTIATQTREAVAALIEQVRRGGDTALRDITARLDGVDLATFEVTAAELAAAATAVAPELQHAMQTAAARIEAFHRAGMTNGYRVETAPGVVCERLVRPIARVGLYVPAGSAPLFSTALMLGVPARLAGCREVVLCTPPSKDGRANPAVLLAARLTGVTRVFTLGGAQAIAAMAYGTASVPTCDKVFGPGNSFVTEAKQQLAQAGVVAIDMPAGPSEVLVIADAAANPAFIAADLLSQAEHGPDSQVLLLSDSDALMTAVQTALALQLQQLSRAEIARQALAQSRLIKVATLETAFDISNRYAPEHLILALRQPRAWLHRVAAAGSVFLGDYTPEALGDYCSGTNHVLPTGGAARAYSGVSVSSFQNMISVQAASRSGIAEIGDCALTLARAEGLDAHANAVALRMGTVP.

Residues Tyr127, Gln189, and Asn212 each contribute to the NAD(+) site. Residues Ser237, Gln259, and His262 each coordinate substrate. Zn(2+) contacts are provided by Gln259 and His262. Catalysis depends on proton acceptor residues Glu326 and His327. Substrate contacts are provided by His327, Asp360, Glu414, and His419. Asp360 provides a ligand contact to Zn(2+). His419 is a Zn(2+) binding site.

It belongs to the histidinol dehydrogenase family. Zn(2+) serves as cofactor.

It catalyses the reaction L-histidinol + 2 NAD(+) + H2O = L-histidine + 2 NADH + 3 H(+). The protein operates within amino-acid biosynthesis; L-histidine biosynthesis; L-histidine from 5-phospho-alpha-D-ribose 1-diphosphate: step 9/9. Functionally, catalyzes the sequential NAD-dependent oxidations of L-histidinol to L-histidinaldehyde and then to L-histidine. The protein is Histidinol dehydrogenase of Xylella fastidiosa (strain 9a5c).